A 116-amino-acid polypeptide reads, in one-letter code: Large ribosomal subunit protein bL17 (116 aa).

It belongs to the bacterial ribosomal protein bL17 family. Part of the 50S ribosomal subunit. Contacts protein L32.

The chain is Large ribosomal subunit protein bL17 from Prochlorococcus marinus (strain SARG / CCMP1375 / SS120).